The chain runs to 143 residues: Nucleoside diphosphate kinase (143 aa).

ATP-binding residues include Lys11, Phe59, Arg87, Thr93, Arg104, and Asn114. His117 (pros-phosphohistidine intermediate) is an active-site residue.

Belongs to the NDK family. As to quaternary structure, homotetramer. Mg(2+) is required as a cofactor.

Its subcellular location is the cytoplasm. It catalyses the reaction a 2'-deoxyribonucleoside 5'-diphosphate + ATP = a 2'-deoxyribonucleoside 5'-triphosphate + ADP. It carries out the reaction a ribonucleoside 5'-diphosphate + ATP = a ribonucleoside 5'-triphosphate + ADP. Major role in the synthesis of nucleoside triphosphates other than ATP. The ATP gamma phosphate is transferred to the NDP beta phosphate via a ping-pong mechanism, using a phosphorylated active-site intermediate. This Shewanella sp. (strain MR-4) protein is Nucleoside diphosphate kinase.